A 61-amino-acid polypeptide reads, in one-letter code: Large ribosomal subunit protein eL37 (61 aa).

4 residues coordinate Zn(2+): C19, C22, C34, and C37. A C4-type zinc finger spans residues 19 to 37 (CRRCGRNAYNVSKHYCAAC).

Belongs to the eukaryotic ribosomal protein eL37 family. The cofactor is Zn(2+).

In terms of biological role, binds to the 23S rRNA. In Saccharolobus islandicus (strain L.S.2.15 / Lassen #1) (Sulfolobus islandicus), this protein is Large ribosomal subunit protein eL37.